Here is a 554-residue protein sequence, read N- to C-terminus: Solute carrier family 22 member 1 (554 aa).

Topologically, residues 1–21 (MPTVDDVLEQVGEFGWFQKRT) are cytoplasmic. Residues 22 to 42 (FLFLCLISAILAPIYLGIVFL) traverse the membrane as a helical segment. Residues 43–149 (GFTPDHRCRS…LVCADAWKVD (107 aa)) lie on the Extracellular side of the membrane. Asparagine 71 carries N-linked (GlcNAc...) asparagine glycosylation. A helical membrane pass occupies residues 150–170 (LFQSCVNLGFFLGSLGVGYIA). The Cytoplasmic segment spans residues 171-176 (DRFGRK). The helical transmembrane segment at 177–197 (LCLLLTTLINAVSGVLTAVAP) threads the bilayer. Over 198-206 (DYTSMLLFR) the chain is Extracellular. A helical transmembrane segment spans residues 207-229 (LLQGLVSKGSWMSGYTLITEFVG). At 230 to 237 (SGYRRTVA) the chain is on the cytoplasmic side. Residues 238–258 (ILYQVAFSVGLVALSGVAYAI) traverse the membrane as a helical segment. Over 259–262 (PNWR) the chain is Extracellular. Residues 263-283 (WLQLTVSLPTFLCLFYYWCVP) form a helical membrane-spanning segment. The short motif at 283-287 (PESPR) is the Proline-rich sequence element. Residues 284–347 (ESPRWLLSQK…FRTPNLRKHT (64 aa)) lie on the Cytoplasmic side of the membrane. Residue serine 333 is modified to Phosphoserine. Residues 348–368 (FILMFLWFTCSVLYQGLILHM) form a helical membrane-spanning segment. Residues 369–374 (GATGGN) are Extracellular-facing. The chain crosses the membrane as a helical span at residues 375–395 (VYLDFFYSSLVEFPAAFVILV). The Cytoplasmic portion of the chain corresponds to 396-402 (TIDRVGR). The chain crosses the membrane as a helical span at residues 403–423 (IYPMAASNLAAGVASVILIFV). The Extracellular portion of the chain corresponds to 424–431 (PQDLHWLT). A helical membrane pass occupies residues 432–452 (IVLSCVGRMGATIVLQMICLV). At 453–464 (NAELYPTFVRNL) the chain is on the cytoplasmic side. A helical membrane pass occupies residues 465–485 (GVMVCSALCDVGGIITPFMVF). Topologically, residues 486-492 (RLMEVWQ) are extracellular. Residues 493-513 (PLPLIVFGVLGLLAGGMTLLL) traverse the membrane as a helical segment. The Cytoplasmic portion of the chain corresponds to 514–554 (PETKGVALPETIEDAENLRRKAKPKESKIYLQVQTSELKGP).

The protein belongs to the major facilitator (TC 2.A.1) superfamily. Organic cation transporter (TC 2.A.1.19) family. In terms of processing, phosphorylated. Expressed in kidney, liver and intestine.

The protein localises to the basolateral cell membrane. Its subcellular location is the apical cell membrane. It is found in the lateral cell membrane. The protein resides in the basal cell membrane. It carries out the reaction 1-methylnicotinamide(out) = 1-methylnicotinamide(in). It catalyses the reaction dopamine(out) = dopamine(in). The catalysed reaction is serotonin(out) = serotonin(in). The enzyme catalyses (R)-adrenaline(out) = (R)-adrenaline(in). It carries out the reaction (R)-noradrenaline(out) = (R)-noradrenaline(in). It catalyses the reaction histamine(out) = histamine(in). The catalysed reaction is guanidine(out) = guanidine(in). The enzyme catalyses choline(out) = choline(in). It carries out the reaction acetylcholine(in) = acetylcholine(out). It catalyses the reaction thiamine(in) = thiamine(out). The catalysed reaction is spermidine(in) = spermidine(out). The enzyme catalyses agmatine(out) = agmatine(in). It carries out the reaction putrescine(out) = putrescine(in). It catalyses the reaction (R)-carnitine(in) = (R)-carnitine(out). The catalysed reaction is O-isobutanoyl-(R)-carnitine(in) = O-isobutanoyl-(R)-carnitine(out). The enzyme catalyses O-acetyl-(R)-carnitine(in) = O-acetyl-(R)-carnitine(out). It carries out the reaction O-3-hydroxybutanoyl-(R)-carnitine(in) = O-3-hydroxybutanoyl-(R)-carnitine(out). It catalyses the reaction O-propanoyl-(R)-carnitine(in) = O-propanoyl-(R)-carnitine(out). The catalysed reaction is O-butanoyl-(R)-carnitine(in) = O-butanoyl-(R)-carnitine(out). The enzyme catalyses O-2-methylbutanoyl-(R)-carnitine(in) = O-2-methylbutanoyl-(R)-carnitine(out). It carries out the reaction O-3-methylbutanoyl-(R)-carnitine(in) = O-3-methylbutanoyl-(R)-carnitine(out). It catalyses the reaction O-hexanoyl-(R)-carnitine(in) = O-hexanoyl-(R)-carnitine(out). The catalysed reaction is L-histidyl-L-proline diketopiperazine(in) = L-histidyl-L-proline diketopiperazine(out). The enzyme catalyses (R)-salsolinol(in) = (R)-salsolinol(out). It carries out the reaction prostaglandin F2alpha(out) = prostaglandin F2alpha(in). It catalyses the reaction prostaglandin E2(out) = prostaglandin E2(in). Its activity is regulated as follows. Phosphorylation of the transporter leads to changes in its substrate affinity, resulting in a regulation of the transport activity. In contrast with rat ortholog, ASP uptake is inhibited by protein kinase A (PKA) and C (PKC) activation. ASP uptake is also endogenously activated by calmodulin, the calmodulin-dependent kinase II and LCK tyrosine kinase. Inhibited by cGMP, most likely through a cGMP-binding protein that interacts with OCT1. Functionally, electrogenic voltage-dependent transporter that mediates the transport of a variety of organic cations such as endogenous bioactive amines, cationic drugs and xenobiotics. Functions as a pH- and Na(+)-independent, bidirectional transporter. Cation cellular uptake or release is driven by the electrochemical potential (i.e. membrane potential and concentration gradient) and substrate selectivity. Hydrophobicity is a major requirement for recognition in polyvalent substrates and inhibitors. Primarily expressed in the basolateral membrane of hepatocytes and proximal tubules and involved in the uptake and disposition of cationic compounds from the blood by hepatic and renal clearance. Most likely functions as an uptake carrier in enterocytes contributing to the intestinal elimination of organic cations from the systemic circulation. Transports endogenous monoamines such as N-1-methylnicotinamide (NMN), guanidine, neurotransmitters dopamine, serotonin, noradrenaline, adrenaline and histamine, and quaternary ammonium compound such as choline. Also transports natural polyamines such as spermidine, agmatine and putrescine at low affinity, but relatively high turnover. Involved in the hepatic and intestinal uptake of the vitamin B1/thiamine, hence regulating hepatic lipid and energy metabolism. Contributes to the influx and efflux of fatty acid carriers carnitines and acylcarnitines across the basolateral membrane of hepatocytes, from the liver to the systemic circulation and inversely and may be involved in regulating the systemic availability of hepatic acylcarnitines. Also capable of transporting non-amine endogenous compounds such as prostaglandin E2 (PGE2) and prostaglandin F2-alpha (PGF2-alpha). May contribute to the transport of cationic compounds in testes across the blood-testis-barrier. Also mediates the uptake of xenobiotics tributylmethylammonium (TBuMA), quinidine, N-methyl-quinine (NMQ), N-methyl-quinidine (NMQD) N-(4,4-azo-n-pentyl)-quinuclidine (APQ), azidoprocainamide methoiodide (AMP), N-(4,4-azo-n-pentyl)-21-deoxyajmalinium (APDA) and 4-(4-(dimethylamino)styryl)-N-methylpyridinium (ASP). The polypeptide is Solute carrier family 22 member 1 (SLC22A1) (Oryctolagus cuniculus (Rabbit)).